The following is a 165-amino-acid chain: Urease accessory protein UreE (165 aa).

It belongs to the UreE family.

It localises to the cytoplasm. Functionally, involved in urease metallocenter assembly. Binds nickel. Probably functions as a nickel donor during metallocenter assembly. This is Urease accessory protein UreE from Flavobacterium johnsoniae (strain ATCC 17061 / DSM 2064 / JCM 8514 / BCRC 14874 / CCUG 350202 / NBRC 14942 / NCIMB 11054 / UW101) (Cytophaga johnsonae).